The sequence spans 85 residues: Cell division topological specificity factor (85 aa).

This sequence belongs to the MinE family.

Functionally, prevents the cell division inhibition by proteins MinC and MinD at internal division sites while permitting inhibition at polar sites. This ensures cell division at the proper site by restricting the formation of a division septum at the midpoint of the long axis of the cell. This chain is Cell division topological specificity factor, found in Thioalkalivibrio sulfidiphilus (strain HL-EbGR7).